Reading from the N-terminus, the 242-residue chain is ATP synthase subunit a (242 aa).

Helical transmembrane passes span 29 to 49 (SAVAMIFVSIAASMLLITAFV), 84 to 104 (FFPLILTLFLFISLGNILGMV), 114 to 134 (IIVTFSLAMIVFTTTLVYGIY), 140 to 160 (FFSLFLPKNIPLWLAPIMVII), 181 to 201 (VAGHILLKIIAWSIVSLTWLF), and 206 to 226 (IALVIVLIGFELFISILQAYI).

Belongs to the ATPase A chain family. In terms of assembly, F-type ATPases have 2 components, CF(1) - the catalytic core - and CF(0) - the membrane proton channel. CF(1) has five subunits: alpha(3), beta(3), gamma(1), delta(1), epsilon(1). CF(0) has three main subunits: a(1), b(2) and c(9-12). The alpha and beta chains form an alternating ring which encloses part of the gamma chain. CF(1) is attached to CF(0) by a central stalk formed by the gamma and epsilon chains, while a peripheral stalk is formed by the delta and b chains.

It localises to the cell inner membrane. Its function is as follows. Key component of the proton channel; it plays a direct role in the translocation of protons across the membrane. This chain is ATP synthase subunit a, found in Orientia tsutsugamushi (strain Ikeda) (Rickettsia tsutsugamushi).